Consider the following 318-residue polypeptide: Isoflavone reductase (318 aa).

Residues 11 to 17 (GPTGAIG), Arg36, and Lys44 each bind NADP(+). The active-site Proton acceptor is Lys144. Arg148 is an NADP(+) binding site.

It belongs to the NmrA-type oxidoreductase family. Isoflavone reductase subfamily.

The catalysed reaction is (3R)-vestitone + NADP(+) = 2'-hydroxyformononetin + NADPH + 2 H(+). Its pathway is phytoalexin biosynthesis; pterocarpan phytoalexin biosynthesis. Its function is as follows. Reduces achiral isoflavones to chiral isoflavanones during the biosynthesis of chiral pterocarpan phytoalexins. The reduction product is a third isomer, which represents the penultimate intermediate in the synthesis of the phytoalexin (-)-medicarpin, the major phytoalexin in Alfalfa. This Medicago sativa (Alfalfa) protein is Isoflavone reductase.